A 654-amino-acid polypeptide reads, in one-letter code: Marinolic acid--CoA ligase (654 aa).

This sequence belongs to the ATP-dependent AMP-binding enzyme family.

It carries out the reaction ATP + a marinolic acid + CoA = AMP + diphosphate + a marinoloyl-CoA.. It catalyses the reaction ATP + a pseudomonic acid + CoA = AMP + diphosphate + a pseudomonoyl-CoA.. The enzyme catalyses marinolate C + ATP + CoA = marinoloyl-CoA C + AMP + diphosphate. The catalysed reaction is pseudomonate C + ATP + CoA = pseudomonoyl-CoA C + AMP + diphosphate. The protein operates within antibiotic biosynthesis. Its function is as follows. Acyl-CoA ligase that catalyzes the CoA acylation of pseudomonate C, leading to the formation of pseudomonoyl-CoA C (PAC-CoA). Also shows high activity with pseudomonoyl-CoA A as substrate. In addition, can activate acetic, octanoic, 2,4-dodecadienoic and 2,4-decadienoic acids, although with much lower activity. In vivo, is probably involved in the biosynthesis of thiomarinol, a naturally occurring double-headed antibiotic. The chain is Marinolic acid--CoA ligase from Pseudoalteromonas sp. (strain SANK 73390).